The following is a 45-amino-acid chain: FKBP-type peptidyl-prolyl cis-trans isomerase, chloroplastic (45 aa).

It belongs to the FKBP-type PPIase family. Expressed in leaves, but not in roots.

The protein resides in the plastid. It localises to the chloroplast thylakoid lumen. It carries out the reaction [protein]-peptidylproline (omega=180) = [protein]-peptidylproline (omega=0). Functionally, PPIases accelerate the folding of proteins. It catalyzes the cis-trans isomerization of proline imidic peptide bonds in oligopeptides. The sequence is that of FKBP-type peptidyl-prolyl cis-trans isomerase, chloroplastic from Vicia faba (Broad bean).